We begin with the raw amino-acid sequence, 556 residues long: Testis-specific protein 10-interacting protein (556 aa).

Residues 1-16 (MGQDTDMLNTYQQLVR) show a composition bias toward polar residues. 4 disordered regions span residues 1–31 (MGQD…LQAP), 50–102 (GCLG…LLPR), 123–155 (LQPS…ANLP), and 179–309 (GGVS…QWRK). Residues 208-219 (GSASDKQVQLQS) show a composition bias toward polar residues. A compositionally biased stretch (acidic residues) spans 244–258 (SEEEQFSEATEEAEE). The segment covering 289–301 (QGQSQGSSPSFNN) has biased composition (polar residues). A coiled-coil region spans residues 379-464 (RQEATRSLLQ…LQGIQHRVQA (86 aa)). Positions 503 to 556 (AGKVDREGTPRKPRSHRSMGVRMEHSPQRPPRTEPTGSQPDRHYNPSLDPECSP) are disordered.

This chain is Testis-specific protein 10-interacting protein (TSGA10IP), found in Homo sapiens (Human).